The chain runs to 209 residues: Kynurenine formamidase (209 aa).

Substrate is bound at residue tryptophan 19. The Zn(2+) site is built by histidine 49, histidine 53, and aspartate 55. The active-site Proton donor/acceptor is the histidine 59. Residues histidine 160 and glutamate 172 each coordinate Zn(2+).

This sequence belongs to the Cyclase 1 superfamily. KynB family. In terms of assembly, homodimer. The cofactor is Zn(2+).

It carries out the reaction N-formyl-L-kynurenine + H2O = L-kynurenine + formate + H(+). The protein operates within amino-acid degradation; L-tryptophan degradation via kynurenine pathway; L-kynurenine from L-tryptophan: step 2/2. In terms of biological role, catalyzes the hydrolysis of N-formyl-L-kynurenine to L-kynurenine, the second step in the kynurenine pathway of tryptophan degradation. This chain is Kynurenine formamidase, found in Ralstonia pickettii (strain 12J).